The sequence spans 102 residues: Small ribosomal subunit protein bS20 (102 aa).

Belongs to the bacterial ribosomal protein bS20 family.

In terms of biological role, binds directly to 16S ribosomal RNA. In Synechococcus sp. (strain WH7803), this protein is Small ribosomal subunit protein bS20.